Here is a 63-residue protein sequence, read N- to C-terminus: Arabinogalactan protein 22 (63 aa).

The signal sequence occupies residues 1 to 27 (MASLKFPLEILAVFVIISVILLPIAQS). 4-hydroxyproline occurs at positions 32, 34, and 36. O-linked (Ara...) hydroxyproline glycosylation is found at Pro32, Pro34, and Pro36. Ser38 is lipidated: GPI-anchor amidated serine. A propeptide spans 39 to 63 (DGTSIDQGIAYVLMMVALALTYFIH) (removed in mature form).

It belongs to the AG-peptide AGP family. Contains 4-hydroxyproline; hydroxylated on Pro-32, Pro-34 and Pro-36. Post-translationally, O-glycosylated on hydroxyprolines; noncontiguous hydroxylproline residues are glycosylated with arabinogalactan.

The protein resides in the cell membrane. Its function is as follows. Proteoglycan that seems to be implicated in diverse developmental roles such as differentiation, cell-cell recognition, embryogenesis and programmed cell death. This is Arabinogalactan protein 22 from Arabidopsis thaliana (Mouse-ear cress).